The chain runs to 300 residues: MILLEVNNRIIEETLALKFENAAAGNKPEAVEVTFADFDGVLYHISNPNGDKTKVMVSISLKFYKELQAHGADELLKRVYGSFLVNPESGYNVSLLYDLENLPASKDSIVHQAGMLKRNCFASVFEKYFQFQEEGKEGENRAVIHYRDDETMYVESKKDRVTVVFSTVFKDDDDVVIGKVFMQEFKEGRRASHTAPQVLFSHREPPLELKDTDAAVGDNIGYITFVLFPRHTNATARDNTINLIHTFRDYLHYHIKCSKAYIHTRMRAKTSDFLKVLNRARPDAEKKEMKTITRKTFSST.

N6-acetyllysine is present on residues lysine 275 and lysine 295.

It belongs to the ARPC2 family. In terms of assembly, component of the Arp2/3 complex composed of ACTR2/ARP2, ACTR3/ARP3, ARPC1B/p41-ARC, ARPC2/p34-ARC, ARPC3/p21-ARC, ARPC4/p20-ARC and ARPC5/p16-ARC. Interacts with SHANK3; the interaction probably mediates the association of SHANK3 with the Arp2/3 complex.

The protein localises to the cytoplasm. It is found in the cytoskeleton. The protein resides in the cell projection. It localises to the synapse. Its subcellular location is the synaptosome. The protein localises to the nucleus. Functionally, actin-binding component of the Arp2/3 complex, a multiprotein complex that mediates actin polymerization upon stimulation by nucleation-promoting factor (NPF). The Arp2/3 complex mediates the formation of branched actin networks in the cytoplasm, providing the force for cell motility. Seems to contact the mother actin filament. In addition to its role in the cytoplasmic cytoskeleton, the Arp2/3 complex also promotes actin polymerization in the nucleus, thereby regulating gene transcription and repair of damaged DNA. The Arp2/3 complex promotes homologous recombination (HR) repair in response to DNA damage by promoting nuclear actin polymerization, leading to drive motility of double-strand breaks (DSBs). In Rattus norvegicus (Rat), this protein is Actin-related protein 2/3 complex subunit 2.